Here is a 296-residue protein sequence, read N- to C-terminus: Urease accessory protein UreD (296 aa).

Belongs to the UreD family. As to quaternary structure, ureD, UreF and UreG form a complex that acts as a GTP-hydrolysis-dependent molecular chaperone, activating the urease apoprotein by helping to assemble the nickel containing metallocenter of UreC. The UreE protein probably delivers the nickel.

It is found in the cytoplasm. In terms of biological role, required for maturation of urease via the functional incorporation of the urease nickel metallocenter. This chain is Urease accessory protein UreD, found in Synechococcus sp. (strain CC9311).